Here is a 149-residue protein sequence, read N- to C-terminus: Transcriptional repressor NrdR (149 aa).

The segment at 3-34 (CPFCSATDTKVIDSRLVADGHQVRRRRECVQC) is a zinc-finger region. The ATP-cone domain occupies 49-139 (PRVVKQDGSR…VYRAFEDVSE (91 aa)).

Belongs to the NrdR family. It depends on Zn(2+) as a cofactor.

In terms of biological role, negatively regulates transcription of bacterial ribonucleotide reductase nrd genes and operons by binding to NrdR-boxes. This chain is Transcriptional repressor NrdR, found in Shewanella pealeana (strain ATCC 700345 / ANG-SQ1).